Here is a 232-residue protein sequence, read N- to C-terminus: Phosphatidylserine decarboxylase proenzyme (232 aa).

Residue S190 is the Schiff-base intermediate with substrate; via pyruvic acid of the active site. S190 bears the Pyruvic acid (Ser); by autocatalysis mark.

Belongs to the phosphatidylserine decarboxylase family. PSD-A subfamily. As to quaternary structure, heterodimer of a large membrane-associated beta subunit and a small pyruvoyl-containing alpha subunit. Requires pyruvate as cofactor. In terms of processing, is synthesized initially as an inactive proenzyme. Formation of the active enzyme involves a self-maturation process in which the active site pyruvoyl group is generated from an internal serine residue via an autocatalytic post-translational modification. Two non-identical subunits are generated from the proenzyme in this reaction, and the pyruvate is formed at the N-terminus of the alpha chain, which is derived from the carboxyl end of the proenzyme. The post-translation cleavage follows an unusual pathway, termed non-hydrolytic serinolysis, in which the side chain hydroxyl group of the serine supplies its oxygen atom to form the C-terminus of the beta chain, while the remainder of the serine residue undergoes an oxidative deamination to produce ammonia and the pyruvoyl prosthetic group on the alpha chain.

Its subcellular location is the cell membrane. The enzyme catalyses a 1,2-diacyl-sn-glycero-3-phospho-L-serine + H(+) = a 1,2-diacyl-sn-glycero-3-phosphoethanolamine + CO2. Its pathway is phospholipid metabolism; phosphatidylethanolamine biosynthesis; phosphatidylethanolamine from CDP-diacylglycerol: step 2/2. In terms of biological role, catalyzes the formation of phosphatidylethanolamine (PtdEtn) from phosphatidylserine (PtdSer). In Agrobacterium fabrum (strain C58 / ATCC 33970) (Agrobacterium tumefaciens (strain C58)), this protein is Phosphatidylserine decarboxylase proenzyme.